The following is a 517-amino-acid chain: Ribonuclease Y (517 aa).

Residues 1-21 (MIESLIALIAAIVGLGIGYLV) traverse the membrane as a helical segment. Positions 207–273 (LINVINIKND…TKVIELLVED (67 aa)) constitute a KH domain. The region spanning 333 to 426 (ALAHSLEVAH…VCAADTLSAA (94 aa)) is the HD domain.

It belongs to the RNase Y family.

The protein resides in the cell membrane. Endoribonuclease that initiates mRNA decay. This is Ribonuclease Y from Campylobacter jejuni subsp. jejuni serotype O:23/36 (strain 81-176).